The following is a 493-amino-acid chain: UDP-glucose 6-dehydrogenase (493 aa).

Residues 11-16, D36, R41, and 89-93 contribute to the NAD(+) site; these read GAGYVG and VNTPT. A disordered region spans residues 88-110; sequence SVNTPTKTYGMGKGRAADLKYIE. K107 carries the post-translational modification N6-acetyllysine. Residues 129 to 135 form an allosteric switch region region; that stretch reads KSTVPVR. 130–132 lines the NAD(+) pocket; that stretch reads STV. E161 (proton donor/acceptor) is an active-site residue. Substrate contacts are provided by residues 161 to 165, 220 to 224, R260, and 267 to 273; these read EFLAE, KLAAN, and KASVGFG. Residue E165 participates in NAD(+) binding. Residue K220 is the Proton donor/acceptor of the active site. C276 serves as the catalytic Nucleophile. 276-279 is an NAD(+) binding site; the sequence is CFQK. The interval 321–325 is important for formation of active hexamer structure; that stretch reads SLFNT. A substrate-binding site is contributed by 338–339; sequence FK. R346 provides a ligand contact to NAD(+). R442 provides a ligand contact to substrate. The disordered stretch occupies residues 466–493; it reads VSSKRIPYTPGEIPKFSLQDPPNKKPKV. T474 carries the phosphothreonine modification.

Belongs to the UDP-glucose/GDP-mannose dehydrogenase family. In terms of assembly, homohexamer.

The catalysed reaction is UDP-alpha-D-glucose + 2 NAD(+) + H2O = UDP-alpha-D-glucuronate + 2 NADH + 3 H(+). It functions in the pathway nucleotide-sugar biosynthesis; UDP-alpha-D-glucuronate biosynthesis; UDP-alpha-D-glucuronate from UDP-alpha-D-glucose: step 1/1. With respect to regulation, UDP-alpha-D-xylose (UDX) acts as a feedback inhibitor. It binds at the same site as the substrate, but functions as allosteric inhibitor by triggering a conformation change that disrupts the active hexameric ring structure and gives rise to an inactive, horseshoe-shaped hexamer. In terms of biological role, catalyzes the formation of UDP-alpha-D-glucuronate, a constituent of complex glycosaminoglycans. Required for the biosynthesis of chondroitin sulfate and heparan sulfate. Required for embryonic development via its role in the biosynthesis of glycosaminoglycans. Required for proper brain and neuronal development. This chain is UDP-glucose 6-dehydrogenase (Ugdh), found in Rattus norvegicus (Rat).